A 248-amino-acid polypeptide reads, in one-letter code: PF03932 family protein CutC (248 aa).

It belongs to the CutC family. Homodimer.

The protein localises to the cytoplasm. The sequence is that of PF03932 family protein CutC from Salmonella paratyphi B (strain ATCC BAA-1250 / SPB7).